The primary structure comprises 285 residues: Hydroxyethylthiazole kinase 1 (285 aa).

Substrate is bound at residue Met-48. Positions 124 and 183 each coordinate ATP. Residue Gly-210 participates in substrate binding.

It belongs to the Thz kinase family. It depends on Mg(2+) as a cofactor.

The enzyme catalyses 5-(2-hydroxyethyl)-4-methylthiazole + ATP = 4-methyl-5-(2-phosphooxyethyl)-thiazole + ADP + H(+). It participates in cofactor biosynthesis; thiamine diphosphate biosynthesis; 4-methyl-5-(2-phosphoethyl)-thiazole from 5-(2-hydroxyethyl)-4-methylthiazole: step 1/1. Catalyzes the phosphorylation of the hydroxyl group of 4-methyl-5-beta-hydroxyethylthiazole (THZ). This is Hydroxyethylthiazole kinase 1 from Methanosphaera stadtmanae (strain ATCC 43021 / DSM 3091 / JCM 11832 / MCB-3).